We begin with the raw amino-acid sequence, 483 residues long: Regulatory protein ViaA (483 aa).

Belongs to the ViaA family. As to quaternary structure, homodimer. Interacts with RavA.

The protein resides in the cytoplasm. Functionally, component of the RavA-ViaA chaperone complex, which may act on the membrane to optimize the function of some of the respiratory chains. ViaA stimulates the ATPase activity of RavA. This Escherichia coli O9:H4 (strain HS) protein is Regulatory protein ViaA.